We begin with the raw amino-acid sequence, 164 residues long: MIMSVMASDSARAVVCTSRPFPKQKLRELVLQALYALEMAPKGEDSLVSLLMTEASVSKKNVLYALMFCKAIRANQSELDALLNATIRTTTLANLTIIERNILRMMLFEHQQNQESSPIPTAVLIAETTRLIKKFSYVEGSSLILAVLGSIFDQVAQEPASMCG.

This sequence belongs to the NusB family.

Its function is as follows. Involved in transcription antitermination. Required for transcription of ribosomal RNA (rRNA) genes. Binds specifically to the boxA antiterminator sequence of the ribosomal RNA (rrn) operons. In Chlamydia muridarum (strain MoPn / Nigg), this protein is Transcription antitermination protein NusB.